The chain runs to 4001 residues: Ankyrin repeat and KH domain-containing protein mask (4001 aa).

Residues 1–14 show a composition bias toward basic and acidic residues; sequence MNNDAKNHESDDLN. 3 disordered regions span residues 1 to 61, 91 to 174, and 391 to 494; these read MNND…NRQL, KNEP…GGGS, and DTDT…FLLD. Polar residues predominate over residues 15 to 30; sequence VRSTAYFNQQTTTNQP. Residues 38–61 are compositionally biased toward low complexity; it reads NNTGSGSGSNNNNNNTNQNPNRQL. Residues 94-117 are compositionally biased toward polar residues; it reads PLTTTESSGVLTNTPLPSNSRLKV. Over residues 118 to 159 the composition is skewed to low complexity; that stretch reads NNNNNTNNTAKMSGTSSSQSSATPTPPTASSSTTTTTTTNIS. Gly residues predominate over residues 160-174; the sequence is TGGGGSGSSGGGGGS. 2 stretches are compositionally biased toward acidic residues: residues 408–425 and 434–486; these read SESE…ESDP and VRED…EDAP. Position 501 is a phosphoserine (Ser501). 15 ANK repeats span residues 546–575, 584–614, 618–647, 651–680, 684–713, 718–747, 751–780, 784–813, 817–846, 851–880, 881–910, 914–943, 947–976, 981–1011, and 1014–1043; these read SGFS…NVNL, DGES…QVED, KDST…DVNA, TGNT…NVEE, NGHT…GINT, FKES…DQEH, EMHT…QVNM, SFES…NIEE, EGYT…NINA, TQET…NLEL, GAST…NVHA, TGDT…ELEH, GGRT…NVNK, NDHT…PFHK, and DNST…ISPT. 2 disordered regions span residues 1046–1067 and 1306–1376; these read AASA…NQMR and QPGE…PTAL. A compositionally biased stretch (polar residues) spans 1367-1376; that stretch reads DNNQPVPTAL. A phosphoserine mark is found at Ser1389 and Ser1588. Disordered stretches follow at residues 1583-1612, 1646-1669, 1682-1779, 1852-1872, 2084-2108, and 2225-2256; these read GDQP…RLGS, SDLE…ENTL, EDGI…SLPL, VVHQ…DGSA, MAQH…QQLH, and TPAP…KERR. Acidic residues-rich tracts occupy residues 1646–1657, 1685–1704, and 1716–1759; these read SDLESECEDDAE, IIVE…EEQD, and DDED…EPDS. The segment covering 1760–1776 has biased composition (low complexity); the sequence is DQGTGNNNNNSKSGASS. Positions 2084–2093 are enriched in low complexity; sequence MAQHQAQQQQ. Polar residues predominate over residues 2228 to 2237; sequence PSSGVSSTKS. ANK repeat units follow at residues 2312–2341, 2345–2374, 2379–2408, 2412–2441, 2447–2476, 2481–2510, 2514–2543, 2549–2578, 2582–2611, and 2615–2644; these read NHDT…NIEH, KGFT…ELEA, TKDT…NKEH, SDYT…EINS, LGIS…DINA, NRNT…NVEH, TGLT…DVNA, SRDT…SVEV, KGNS…DIDS, and RRVS…QFPS. Residues 2674–2732 adopt a coiled-coil conformation; it reads AKEAQAVKANKNASILLEELDLERTREESRKAAAARRRERKKKKKMEKKEEKRRQQQGN. Position 2687 is a phosphoserine (Ser2687). Phosphothreonine is present on Thr2698. Residues 2699–3033 form a disordered region; the sequence is REESRKAAAA…TSTTTAASSV (335 aa). Residues 2706–2719 show a composition bias toward basic residues; it reads AAARRRERKKKKKM. Acidic residues predominate over residues 2739 to 2762; sequence MQGDDDDASDKDDDSDKDDEDEEA. Phosphoserine occurs at positions 2747 and 2753. Residues 2793 to 2810 are compositionally biased toward low complexity; the sequence is SQSAQAAEAAANSVSTNS. Over residues 2828 to 2839 the composition is skewed to polar residues; that stretch reads EPTQPVITSNSV. Positions 2868-2886 are enriched in basic and acidic residues; it reads RQLDVKKEEPALKKKEEKN. A compositionally biased stretch (low complexity) spans 2906 to 2941; sequence ALPAKQQPSSSSKLQSSESASNINSSTATNTSSANT. Positions 2950–2960 are enriched in polar residues; the sequence is ASQTASATTLN. Basic and acidic residues predominate over residues 2963 to 2975; sequence KRTEVDGWKEVVR. Over residues 2995 to 3004 the composition is skewed to polar residues; the sequence is TATSSATSVQ. Low complexity predominate over residues 3012–3032; that stretch reads ANSSSNSSSSLTTSTTTAASS. Positions 3036–3100 constitute a KH domain; sequence MTCKKVQVPV…DATKQAHMLI (65 aa). Low complexity-rich tracts occupy residues 3156–3178, 3195–3227, and 3244–3257; these read ASTT…ASYS, SGRS…AGSS, and NGVI…SSKS. Disordered stretches follow at residues 3156 to 3329, 3383 to 3457, 3520 to 3636, and 3744 to 3786; these read ASTT…GQGG, KPIA…QTSQ, AVGD…PPTA, and IFPQ…GGAA. Residues 3262-3278 show a composition bias toward polar residues; sequence QKSSTTLGKSSTVSPGA. Low complexity predominate over residues 3396–3416; that stretch reads GSPTQVQQQHQTQQQQQQQLP. Residues 3417–3427 are compositionally biased toward pro residues; that stretch reads QPAPVPGPQPQ. Over residues 3428–3457 the composition is skewed to low complexity; it reads QQPLQQQQQQQAPQQQPQQPNQQQQPQTSQ. Residues 3539–3559 are compositionally biased toward polar residues; the sequence is NILSSPVGSSKASSNHSTSPP. Residues 3565–3577 are compositionally biased toward low complexity; the sequence is QQQQQQQPQSSQQ. Ser3596 carries the post-translational modification Phosphoserine. Over residues 3774-3786 the composition is skewed to low complexity; it reads PPGTGARQPGGAA. 3 positions are modified to phosphoserine: Ser3820, Ser3822, and Ser3825. A disordered region spans residues 3876–3945; the sequence is KAQPPGLQQP…HNMQAPPNMS (70 aa). The span at 3891–3910 shows a compositional bias: low complexity; the sequence is SQQQQQQPLNWLKQQPQQQQ.

In terms of assembly, may interact with Unc-89 (via protein kinase domain 1 or 2). As to expression, expressed ubiquitously in eye imaginal disk, slightly higher expression is seen in presumptive photoreceptors. Expressed in indirect flight muscle (IFM) (at protein level).

It is found in the cytoplasm. It localises to the myofibril. The protein localises to the sarcomere. The protein resides in the z line. Its subcellular location is the m line. In terms of biological role, mediator of receptor tyrosine kinase (RTK) signaling, and may act either downstream of MAPK or transduce signaling through a parallel branch of the RTK pathway. Required for the development and organization of indirect flight muscle sarcomeres by regulating the formation of M line and H zone and the correct assembly of thick and thin filaments in the sarcomere. The protein is Ankyrin repeat and KH domain-containing protein mask of Drosophila melanogaster (Fruit fly).